A 269-amino-acid polypeptide reads, in one-letter code: Diadenylate cyclase (269 aa).

Positions 109 to 266 constitute a DAC domain; it reads RSGIYDLFAN…GGKMILEIDP (158 aa).

This sequence belongs to the adenylate cyclase family. DacZ subfamily. Mn(2+) is required as a cofactor.

It carries out the reaction 2 ATP = 3',3'-c-di-AMP + 2 diphosphate. Its function is as follows. Diadenylate cyclase that catalyzes the condensation of 2 ATP molecules into cyclic di-AMP (c-di-AMP). c-di-AMP is a second messenger for intracellular signal transduction involved in the control of important regulatory processes such as osmoregulation. Is essential for H.volcanii. Overexpression of DacZ leads to cell death, suggesting the need for tight regulation of c-di-AMP levels. Cannot use GTP as substrate. This Haloferax volcanii (strain ATCC 29605 / DSM 3757 / JCM 8879 / NBRC 14742 / NCIMB 2012 / VKM B-1768 / DS2) (Halobacterium volcanii) protein is Diadenylate cyclase.